We begin with the raw amino-acid sequence, 411 residues long: Protein translocase subunit SecY (411 aa).

A run of 10 helical transmembrane segments spans residues 11–31, 52–72, 111–131, 135–155, 163–180, 197–217, 253–273, 291–311, 349–369, and 377–397; these read IIFT…PVPG, IFSG…VPYI, ALGW…PYVF, FAFV…IMWL, GIGN…VSGL, SLKF…TICV, VMPI…TQII, LYLL…TSIV, TFLG…IEKV, and GLGA…AKQI.

Belongs to the SecY/SEC61-alpha family. Component of the plastid Sec protein translocase complex, which is composed of at least SecY, SecE and SecG.

It localises to the plastid. The protein resides in the chloroplast thylakoid membrane. In terms of biological role, the central subunit of the protein translocation channel SecYE. Consists of two halves formed by TMs 1-5 and 6-10. These two domains form a lateral gate at the front which open onto the bilayer between TMs 2 and 7, and are clamped together by SecE at the back. The channel is closed by both a pore ring composed of hydrophobic SecY resides and a short helix (helix 2A) on the extracellular side of the membrane which forms a plug. The protein is Protein translocase subunit SecY of Pyropia yezoensis (Susabi-nori).